The following is a 231-amino-acid chain: Phosphatidylserine decarboxylase proenzyme (231 aa).

Residue serine 188 is the Schiff-base intermediate with substrate; via pyruvic acid of the active site. Pyruvic acid (Ser); by autocatalysis is present on serine 188.

It belongs to the phosphatidylserine decarboxylase family. PSD-A subfamily. As to quaternary structure, heterodimer of a large membrane-associated beta subunit and a small pyruvoyl-containing alpha subunit. Requires pyruvate as cofactor. Post-translationally, is synthesized initially as an inactive proenzyme. Formation of the active enzyme involves a self-maturation process in which the active site pyruvoyl group is generated from an internal serine residue via an autocatalytic post-translational modification. Two non-identical subunits are generated from the proenzyme in this reaction, and the pyruvate is formed at the N-terminus of the alpha chain, which is derived from the carboxyl end of the proenzyme. The post-translation cleavage follows an unusual pathway, termed non-hydrolytic serinolysis, in which the side chain hydroxyl group of the serine supplies its oxygen atom to form the C-terminus of the beta chain, while the remainder of the serine residue undergoes an oxidative deamination to produce ammonia and the pyruvoyl prosthetic group on the alpha chain.

The protein resides in the cell membrane. The catalysed reaction is a 1,2-diacyl-sn-glycero-3-phospho-L-serine + H(+) = a 1,2-diacyl-sn-glycero-3-phosphoethanolamine + CO2. The protein operates within phospholipid metabolism; phosphatidylethanolamine biosynthesis; phosphatidylethanolamine from CDP-diacylglycerol: step 2/2. In terms of biological role, catalyzes the formation of phosphatidylethanolamine (PtdEtn) from phosphatidylserine (PtdSer). The chain is Phosphatidylserine decarboxylase proenzyme from Rickettsia peacockii (strain Rustic).